A 167-amino-acid chain; its full sequence is Swarming motility protein SwrB (167 aa).

The interval 63–105 is disordered; it reads IENKASSASQSDEESQKSGLQTSETYQERDPVQEAENLPEHIE. Residues 88–105 are compositionally biased toward basic and acidic residues; the sequence is YQERDPVQEAENLPEHIE.

In terms of biological role, required for swarming motility and for maximal sigma-D activity. The chain is Swarming motility protein SwrB (swrB) from Bacillus subtilis (strain 168).